The sequence spans 143 residues: Large ribosomal subunit protein uL13 (143 aa).

Belongs to the universal ribosomal protein uL13 family. In terms of assembly, part of the 50S ribosomal subunit.

In terms of biological role, this protein is one of the early assembly proteins of the 50S ribosomal subunit, although it is not seen to bind rRNA by itself. It is important during the early stages of 50S assembly. In Natranaerobius thermophilus (strain ATCC BAA-1301 / DSM 18059 / JW/NM-WN-LF), this protein is Large ribosomal subunit protein uL13.